We begin with the raw amino-acid sequence, 466 residues long: Ribulose bisphosphate carboxylase large chain (466 aa).

An N6,N6,N6-trimethyllysine modification is found at Lys5. Residues Asn114 and Thr164 each coordinate substrate. The active-site Proton acceptor is the Lys166. Substrate is bound at residue Lys168. Mg(2+) contacts are provided by Lys192, Asp194, and Glu195. Lys192 is subject to N6-carboxylysine. His285 serves as the catalytic Proton acceptor. The substrate site is built by Arg286, His318, and Ser370.

It belongs to the RuBisCO large chain family. Type I subfamily. As to quaternary structure, heterohexadecamer of 8 large chains and 8 small chains; disulfide-linked. The disulfide link is formed within the large subunit homodimers. Mg(2+) serves as cofactor. The disulfide bond which can form in the large chain dimeric partners within the hexadecamer appears to be associated with oxidative stress and protein turnover.

It is found in the plastid. It localises to the chloroplast. It carries out the reaction 2 (2R)-3-phosphoglycerate + 2 H(+) = D-ribulose 1,5-bisphosphate + CO2 + H2O. The catalysed reaction is D-ribulose 1,5-bisphosphate + O2 = 2-phosphoglycolate + (2R)-3-phosphoglycerate + 2 H(+). RuBisCO catalyzes two reactions: the carboxylation of D-ribulose 1,5-bisphosphate, the primary event in carbon dioxide fixation, as well as the oxidative fragmentation of the pentose substrate in the photorespiration process. Both reactions occur simultaneously and in competition at the same active site. This chain is Ribulose bisphosphate carboxylase large chain, found in Bixa orellana (Lipstick tree).